The primary structure comprises 134 residues: uncharacterized protein (134 aa).

An N-terminal signal peptide occupies residues 1–23 (MWHLRCSNWRGSGVFGMCFSLSG). C24 is lipidated: N-palmitoyl cysteine. C24 carries the S-diacylglycerol cysteine lipid modification.

It is found in the cell membrane. This is an uncharacterized protein from Treponema pallidum (strain Nichols).